We begin with the raw amino-acid sequence, 548 residues long: Chaperonin GroEL (548 aa).

ATP-binding positions include 30-33 (TLGP), Lys51, 87-91 (DGTTT), Gly415, 479-481 (NAA), and Asp495.

The protein belongs to the chaperonin (HSP60) family. In terms of assembly, forms a cylinder of 14 subunits composed of two heptameric rings stacked back-to-back. Interacts with the co-chaperonin GroES.

It localises to the cytoplasm. The catalysed reaction is ATP + H2O + a folded polypeptide = ADP + phosphate + an unfolded polypeptide.. Functionally, together with its co-chaperonin GroES, plays an essential role in assisting protein folding. The GroEL-GroES system forms a nano-cage that allows encapsulation of the non-native substrate proteins and provides a physical environment optimized to promote and accelerate protein folding. The protein is Chaperonin GroEL of Pseudomonas fluorescens (strain Pf0-1).